The sequence spans 1026 residues: Lon protease homolog, mitochondrial (1026 aa).

Residues methionine 1–tyrosine 29 constitute a mitochondrion transit peptide. 2 disordered regions span residues tyrosine 29–leucine 55 and alanine 185–serine 206. In terms of domain architecture, Lon N-terminal spans methionine 62–leucine 345. Residues alanine 185 to threonine 194 are compositionally biased toward acidic residues. Basic and acidic residues predominate over residues valine 195–serine 206. Glycine 497–threonine 504 provides a ligand contact to ATP. A disordered region spans residues threonine 711–valine 785. Positions leucine 714–aspartate 737 are enriched in polar residues. The Lon proteolytic domain maps to threonine 815–glycine 1001. Catalysis depends on residues serine 907 and lysine 950.

The protein belongs to the peptidase S16 family. In terms of assembly, homohexamer or homoheptamer. Organized in a ring with a central cavity.

It is found in the mitochondrion matrix. The catalysed reaction is Hydrolysis of proteins in presence of ATP.. In terms of biological role, ATP-dependent serine protease that mediates the selective degradation of misfolded, unassembled or oxidatively damaged polypeptides as well as certain short-lived regulatory proteins in the mitochondrial matrix. May also have a chaperone function in the assembly of inner membrane protein complexes. Participates in the regulation of mitochondrial gene expression and in the maintenance of the integrity of the mitochondrial genome. Binds to mitochondrial DNA in a site-specific manner. The sequence is that of Lon protease homolog, mitochondrial from Candida glabrata (strain ATCC 2001 / BCRC 20586 / JCM 3761 / NBRC 0622 / NRRL Y-65 / CBS 138) (Yeast).